The following is a 490-amino-acid chain: Adenylosuccinate synthetase, chloroplastic (490 aa).

Residues 1 to 45 (MSLSSLTLDSNPRFAVGGPYHRRYPPLHHPRSFVSCSAKRPAVSA) constitute a chloroplast transit peptide. An N-acetylserine modification is found at Ser-46. GTP-binding positions include 77–83 (GDEGKGK) and 105–107 (GHT). The active-site Proton acceptor is Asp-78. Residues Asp-78 and Gly-105 each coordinate Mg(2+). IMP contacts are provided by residues 78–81 (DEGK), 103–106 (NAGH), Thr-195, Arg-209, Gln-289, Thr-304, and Arg-368. Catalysis depends on His-106, which acts as the Proton donor. 364–370 (TTTGRPR) lines the substrate pocket. GTP is bound by residues Arg-370, 396 to 398 (KLD), and 479 to 481 (GIG).

Belongs to the adenylosuccinate synthetase family. In terms of assembly, homodimer. Mg(2+) is required as a cofactor.

It is found in the plastid. It localises to the chloroplast. The catalysed reaction is IMP + L-aspartate + GTP = N(6)-(1,2-dicarboxyethyl)-AMP + GDP + phosphate + 2 H(+). The protein operates within purine metabolism; AMP biosynthesis via de novo pathway; AMP from IMP: step 1/2. Plays an important role in the de novo pathway and in the salvage pathway of purine nucleotide biosynthesis. Catalyzes the first committed step in the biosynthesis of AMP from IMP. This chain is Adenylosuccinate synthetase, chloroplastic, found in Arabidopsis thaliana (Mouse-ear cress).